The primary structure comprises 194 residues: uncharacterized protein (194 aa).

The first 22 residues, 1-22 (MNKVTKTAIAGLLALFAGNAAA), serve as a signal peptide directing secretion. Cysteine 38 and cysteine 78 form a disulfide bridge.

The protein belongs to the fimbrial protein family.

Its subcellular location is the fimbrium. In terms of biological role, part of the yraHIJK fimbrial operon. Could contribute to adhesion to various surfaces in specific environmental niches. Increases adhesion to eukaryotic T24 bladder epithelial cells in the absence of fim operon. This is an uncharacterized protein from Escherichia coli (strain K12).